A 300-amino-acid polypeptide reads, in one-letter code: GTPase Era (300 aa).

In terms of domain architecture, Era-type G spans 7–175 (KSGFAVMAGL…KTAVAETLPF (169 aa)). The tract at residues 15 to 22 (GLPNAGKS) is G1. 15–22 (GLPNAGKS) contributes to the GTP binding site. The segment at 41–45 (QMTRQ) is G2. Positions 62–65 (DTPG) are G3. Residues 62-66 (DTPGF) and 124-127 (NKAD) contribute to the GTP site. The G4 stretch occupies residues 124–127 (NKAD). Residues 154–156 (ISA) form a G5 region. Residues 198–283 (IREQIFNLYE…RLELEVSVEP (86 aa)) form the KH type-2 domain.

This sequence belongs to the TRAFAC class TrmE-Era-EngA-EngB-Septin-like GTPase superfamily. Era GTPase family. As to quaternary structure, monomer.

The protein resides in the cytoplasm. It is found in the cell inner membrane. Its function is as follows. An essential GTPase that binds both GDP and GTP, with rapid nucleotide exchange. Plays a role in 16S rRNA processing and 30S ribosomal subunit biogenesis and possibly also in cell cycle regulation and energy metabolism. The polypeptide is GTPase Era (Elusimicrobium minutum (strain Pei191)).